A 47-amino-acid polypeptide reads, in one-letter code: Delta-actitoxin-Axm1d (47 aa).

3 disulfides stabilise this stretch: Cys4–Cys44, Cys6–Cys34, and Cys27–Cys45.

It belongs to the sea anemone sodium channel inhibitory toxin family. Type I subfamily.

The protein resides in the secreted. The protein localises to the nematocyst. Functionally, binds specifically to voltage-gated sodium channels (Nav), thereby delaying their inactivation during signal transduction. Thus it strongly stimulates mammalian cardiac muscle contraction. This is Delta-actitoxin-Axm1d from Anthopleura xanthogrammica (Giant green sea anemone).